Consider the following 550-residue polypeptide: Arginine--tRNA ligase (550 aa).

The short motif at 124 to 134 (ANPTGPLHVGH) is the 'HIGH' region element.

Belongs to the class-I aminoacyl-tRNA synthetase family. In terms of assembly, monomer.

It is found in the cytoplasm. The catalysed reaction is tRNA(Arg) + L-arginine + ATP = L-arginyl-tRNA(Arg) + AMP + diphosphate. The chain is Arginine--tRNA ligase from Desulfovibrio desulfuricans (strain ATCC 27774 / DSM 6949 / MB).